The chain runs to 27 residues: Vasotocin-neurophysin VT (27 aa).

A disulfide bridge links Cys-1 with Cys-6. Gly-9 is subject to Glycine amide.

This sequence belongs to the vasopressin/oxytocin family.

Vasotocin is an antidiuretic hormone. The chain is Vasotocin-neurophysin VT from Sclerophrys regularis (Common African toad).